Reading from the N-terminus, the 384-residue chain is Lipid-A-disaccharide synthase (384 aa).

Belongs to the LpxB family.

The enzyme catalyses a lipid X + a UDP-2-N,3-O-bis[(3R)-3-hydroxyacyl]-alpha-D-glucosamine = a lipid A disaccharide + UDP + H(+). Its pathway is bacterial outer membrane biogenesis; LPS lipid A biosynthesis. In terms of biological role, condensation of UDP-2,3-diacylglucosamine and 2,3-diacylglucosamine-1-phosphate to form lipid A disaccharide, a precursor of lipid A, a phosphorylated glycolipid that anchors the lipopolysaccharide to the outer membrane of the cell. The sequence is that of Lipid-A-disaccharide synthase from Geobacter sulfurreducens (strain ATCC 51573 / DSM 12127 / PCA).